A 259-amino-acid chain; its full sequence is Putative cysteine-rich repeat secretory protein 25 (259 aa).

Residues 1-31 form the signal peptide; that stretch reads MSSSFLSRPLVSVYVFAMVTMQLLFMQSVLS. 2 Gnk2-homologous domains span residues 37–138 and 144–256; these read AYLN…SIYT and YRHI…LYPF.

It belongs to the cysteine-rich repeat secretory protein family.

The protein localises to the secreted. This is Putative cysteine-rich repeat secretory protein 25 (CRRSP25) from Arabidopsis thaliana (Mouse-ear cress).